Here is a 931-residue protein sequence, read N- to C-terminus: MDYSKTLNLPQTQFPMRGNLPQREPETQKYWQEIDLYKKVQEKNKGKTKFILHDGPPYANGHIHLGHTLNKVLKDIIVKYRSMSGYDAPYVPGWDTHGLPIEQQAIKQLGINRHQVNPVEFRAKCKDYALKWANTQSEEFQRLGVRGDWENPYYTLLPQYEATQIRVFGEMAKKGYIYKGLKPVYWCASCETALAEAEVEYADKTSPSIYVKFPVKDGKGVLPQDAAVVIWTTTPWTLPANVAISVHPEFEYVLAAVQNQKIVVAKELLESFKQAVGAEEAEILATYQGEQLERVVCQHPFIDERESLVILGEHVTLDAGTGAVHTAPGHGEEDFMVGKKYELPVLAPIDNRGRFTSEGGKFQGQFIMDANKTIIEELKERDALMGHVSIKHQYPHCWRCKQPIFFRATEQWFASVDGFRQEALQAIRNVKWVPSWGEDRIYNMVEGRGDWCVSRQRTWGVPIPIFYCNDCGKEIITEETISHIEKLFREHGSDIWFAKEANELVPASLTCPHCGKGKDFRKETDTMDVWFDSGSSHLAVLNQPELWPEQQRPADLYLEGSDQHRGWFNSSLSTSVAVTGKPPYKTVLTHGFTVDEKGRKMSKSLGNVVDPLKICSQMGADILRLWVSSADYRADLALSQNILKQMTESYRKIRNTARFLLGNLYDFDPVKDKVAYDKLPELDRVALMELHKLIKQVLAAYENYEFHIVYHAVHNYCVVDLSAFYLDIIKDRLYTAVPGSLERRAAQTVLYEALDALVRLLTPVLAFTTEEIYKYMPVVGDRLASVQMLDMPEVNVEYMDVELEKKWDKIHEIRKEVLKALEVARKNKVIGNALEAKVDLYVAGDVEEVLKPMAAELTTLFIVSKVNLHGLAAAPADAVKAEELELALQVATAEGGKCERCWMYHEEVGNDAEHATLCPRCATVVKEHHTA.

Residues 1-14 (MDYSKTLNLPQTQF) are compositionally biased toward polar residues. Residues 1–25 (MDYSKTLNLPQTQFPMRGNLPQREP) are disordered. The short motif at 57-67 (PYANGHIHLGH) is the 'HIGH' region element. Glutamate 559 is a binding site for L-isoleucyl-5'-AMP. Residues 600–604 (KMSKS) carry the 'KMSKS' region motif. ATP is bound at residue lysine 603. Zn(2+)-binding residues include cysteine 898, cysteine 901, cysteine 918, and cysteine 921.

It belongs to the class-I aminoacyl-tRNA synthetase family. IleS type 1 subfamily. Monomer. Zn(2+) is required as a cofactor.

Its subcellular location is the cytoplasm. It catalyses the reaction tRNA(Ile) + L-isoleucine + ATP = L-isoleucyl-tRNA(Ile) + AMP + diphosphate. In terms of biological role, catalyzes the attachment of isoleucine to tRNA(Ile). As IleRS can inadvertently accommodate and process structurally similar amino acids such as valine, to avoid such errors it has two additional distinct tRNA(Ile)-dependent editing activities. One activity is designated as 'pretransfer' editing and involves the hydrolysis of activated Val-AMP. The other activity is designated 'posttransfer' editing and involves deacylation of mischarged Val-tRNA(Ile). This Desulforamulus reducens (strain ATCC BAA-1160 / DSM 100696 / MI-1) (Desulfotomaculum reducens) protein is Isoleucine--tRNA ligase.